The chain runs to 86 residues: RNA-binding protein Hfq (86 aa).

The region spanning 9–68 is the Sm domain; the sequence is DPYLNTLRKEKVGVSIYLVNGIKLQGTIESFDQFVILLKNTVSQMVYKHAISTVVPVRPI.

This sequence belongs to the Hfq family. In terms of assembly, homohexamer.

Functionally, RNA chaperone that binds small regulatory RNA (sRNAs) and mRNAs to facilitate mRNA translational regulation in response to envelope stress, environmental stress and changes in metabolite concentrations. Also binds with high specificity to tRNAs. The chain is RNA-binding protein Hfq from Pseudomonas savastanoi pv. phaseolicola (strain 1448A / Race 6) (Pseudomonas syringae pv. phaseolicola (strain 1448A / Race 6)).